Here is a 185-residue protein sequence, read N- to C-terminus: UPF0301 protein Tbd_2579 (185 aa).

Belongs to the UPF0301 (AlgH) family.

The protein is UPF0301 protein Tbd_2579 of Thiobacillus denitrificans (strain ATCC 25259 / T1).